Here is a 343-residue protein sequence, read N- to C-terminus: Ion-translocating oxidoreductase complex subunit D (343 aa).

The next 4 helical transmembrane spans lie at 24-44 (VLLA…AGTL), 45-65 (YNLA…LAAR), 69-91 (LAFF…ALPP), and 124-144 (AMLG…SWPA). T171 carries the FMN phosphoryl threonine modification. 5 consecutive transmembrane segments (helical) span residues 197 to 217 (FGGA…LYLL), 221 to 241 (LITW…SLLF), 251 to 271 (GSPL…FIVT), 284 to 304 (LVFG…GGYP), and 305 to 325 (DAVA…DYYT).

Belongs to the NqrB/RnfD family. As to quaternary structure, the complex is composed of six subunits: RnfA, RnfB, RnfC, RnfD, RnfE and RnfG. The cofactor is FMN.

It localises to the cell inner membrane. Part of a membrane-bound complex that couples electron transfer with translocation of ions across the membrane. The polypeptide is Ion-translocating oxidoreductase complex subunit D (Ectopseudomonas mendocina (strain ymp) (Pseudomonas mendocina)).